The sequence spans 887 residues: DNA mismatch repair protein MutS (887 aa).

621–628 (GPNMGGKS) provides a ligand contact to ATP. Residues 828 to 853 (AEPEPNKPAAAAKTKPASPQPDLFAS) are disordered. Positions 834–848 (KPAAAAKTKPASPQP) are enriched in low complexity.

The protein belongs to the DNA mismatch repair MutS family.

This protein is involved in the repair of mismatches in DNA. It is possible that it carries out the mismatch recognition step. This protein has a weak ATPase activity. This chain is DNA mismatch repair protein MutS, found in Saccharophagus degradans (strain 2-40 / ATCC 43961 / DSM 17024).